The primary structure comprises 367 residues: Isocitrate dehydrogenase [NAD] regulatory subunit 2, mitochondrial (367 aa).

Residues 1-25 constitute a mitochondrion transit peptide; that stretch reads MSRQSFSLLKNLRSIASGSKIQTRS.

Belongs to the isocitrate and isopropylmalate dehydrogenases family. In terms of assembly, heterooligomer of catalytic and regulatory subunits. As to expression, ubiquitous. Predominantly expressed in roots, stems and leaves.

It is found in the mitochondrion. Functionally, performs an essential role in the oxidative function of the citric acid cycle. In Arabidopsis thaliana (Mouse-ear cress), this protein is Isocitrate dehydrogenase [NAD] regulatory subunit 2, mitochondrial (IDH2).